The following is a 600-amino-acid chain: Integrator complex subunit 11 (600 aa).

6 residues coordinate Zn(2+): His68, His70, Asp72, His73, His157, and Asp178. Residues 68–73 (HFHLDH) carry the HXHXDH motif motif. Glu203 is an active-site residue. His414 lines the Zn(2+) pocket. The Nuclear localization signal motif lies at 469 to 479 (LLPDAKKPKLM).

This sequence belongs to the metallo-beta-lactamase superfamily. RNA-metabolizing metallo-beta-lactamase-like family. INTS11 subfamily. Component of the Integrator complex, composed of core subunits INTS1, INTS2, INTS3, INTS4, INTS5, INTS6, INTS7, INTS8, INTS9/RC74, INTS10, INTS11/CPSF3L, INTS12, INTS13, INTS14 and INTS15. The core complex associates with protein phosphatase 2A subunits PPP2CA and PPP2R1A, to form the Integrator-PP2A (INTAC) complex. INTS11 is part of the RNA endonuclease subcomplex, composed of INTS4, INTS9, INTS11 and inositol hexakisphosphate (InsP6). The cofactor is Zn(2+).

The protein localises to the nucleus. Its subcellular location is the cytoplasm. RNA endonuclease component of the integrator complex, a multiprotein complex that terminates RNA polymerase II (Pol II) transcription in the promoter-proximal region of genes. The integrator complex provides a quality checkpoint during transcription elongation by driving premature transcription termination of transcripts that are unfavorably configured for transcriptional elongation: the complex terminates transcription by (1) catalyzing dephosphorylation of the C-terminal domain (CTD) of Pol II subunit POLR2A/RPB1 and SUPT5H/SPT5, (2) degrading the exiting nascent RNA transcript via endonuclease activity and (3) promoting the release of Pol II from bound DNA. The integrator complex is also involved in terminating the synthesis of non-coding Pol II transcripts, such as enhancer RNAs (eRNAs), small nuclear RNAs (snRNAs), telomerase RNAs and long non-coding RNAs (lncRNAs). Within the integrator complex, INTS11 constitutes the RNA endonuclease subunit that degrades exiting nascent RNA transcripts. This is Integrator complex subunit 11 (INTS11) from Gallus gallus (Chicken).